The chain runs to 869 residues: Serendipity locus protein H-1 (869 aa).

The span at 1–17 (MEGGKGEGKRMKEEAPS) shows a compositional bias: basic and acidic residues. Disordered stretches follow at residues 1–32 (MEGGKGEGKRMKEEAPSKKLPPKIYGGDAGTP) and 134–165 (FSVTFLRPEPPNAFTNSPFKKTSSSGTSTPVK). The segment covering 146–164 (AFTNSPFKKTSSSGTSTPV) has biased composition (polar residues). 8 consecutive C2H2-type zinc fingers follow at residues 269–293 (HKCLDCNGLLLETPDEVAKHEAAAH), 299–321 (YRCSECQREFELLAGLKKHLKTH), 331–352 (KKCPDCGKCLKLGSMWMHRKIH), 358–380 (YQCDICGQKFVQKINLTHHARIH), 386–408 (YECPECQKRFQERSHLQRHQKYH), 414–436 (YRCEKCGKMYKTERCLKVHNLVH), 442–464 (FACTVCDKSFISNSKLKQHSNIH), and 470–493 (FKCNYCPRDFTNFPNWLKHTRRRH). Disordered regions lie at residues 554–573 (TSTAAPAPAKQARKKKQPQQ) and 617–652 (PKQTKAKRERKQLAPKQLQQKPQLLQQGQPQQSSLE). Positions 630–648 (APKQLQQKPQLLQQGQPQQ) are enriched in low complexity.

Distribution varies between nurse cells and the oocyte during oogenesis. Weakly expressed in follicle and border cells.

It localises to the nucleus. Its function is as follows. May belong to a complex set of multifingered proteins which play an important role in gene activation or regulation at early embryonic stages through a maximal accumulation of their transcripts (or protein product) in the mature oocyte. The sequence is that of Serendipity locus protein H-1 (wdn) from Drosophila melanogaster (Fruit fly).